The primary structure comprises 412 residues: Serine hydroxymethyltransferase (412 aa).

Residues Leu-116 and 120 to 122 contribute to the (6S)-5,6,7,8-tetrahydrofolate site; that span reads GHL. Residue Lys-225 is modified to N6-(pyridoxal phosphate)lysine. (6S)-5,6,7,8-tetrahydrofolate is bound by residues Glu-241 and 350–352; that span reads SPF.

It belongs to the SHMT family. As to quaternary structure, homodimer. Requires pyridoxal 5'-phosphate as cofactor.

It localises to the cytoplasm. It carries out the reaction (6R)-5,10-methylene-5,6,7,8-tetrahydrofolate + glycine + H2O = (6S)-5,6,7,8-tetrahydrofolate + L-serine. Its pathway is one-carbon metabolism; tetrahydrofolate interconversion. The protein operates within amino-acid biosynthesis; glycine biosynthesis; glycine from L-serine: step 1/1. Its function is as follows. Catalyzes the reversible interconversion of serine and glycine with tetrahydrofolate (THF) serving as the one-carbon carrier. This reaction serves as the major source of one-carbon groups required for the biosynthesis of purines, thymidylate, methionine, and other important biomolecules. Also exhibits THF-independent aldolase activity toward beta-hydroxyamino acids, producing glycine and aldehydes, via a retro-aldol mechanism. The sequence is that of Serine hydroxymethyltransferase from Enterococcus faecalis (strain ATCC 700802 / V583).